Here is a 520-residue protein sequence, read N- to C-terminus: Ribonuclease Y (520 aa).

A helical membrane pass occupies residues 4–24; sequence TMFTIISILLSLICLVVGYFV. One can recognise a KH domain in the interval 210–273; it reads TVSVVNLPND…ETARIALDKL (64 aa). Residues 336 to 429 enclose the HD domain; that stretch reads VLKHSIEVAH…VAAADALSAA (94 aa).

This sequence belongs to the RNase Y family.

It localises to the cell membrane. Endoribonuclease that initiates mRNA decay. This Bacillus pumilus (strain SAFR-032) protein is Ribonuclease Y.